The primary structure comprises 322 residues: Putative DNA-directed RNA polymerase subunit alpha-like 2 (322 aa).

Residues 1–232 (MSNPNNGAEW…GLLSLVFQAE (232 aa)) are alpha N-terminal domain (alpha-NTD). The alpha C-terminal domain (alpha-CTD) stretch occupies residues 280–322 (EGPVTDEEGDSIDPTFTPVQKWDITMNSYQYSGETFQGLLSRF).

It belongs to the RNA polymerase alpha chain family. As to quaternary structure, in plastids the minimal PEP RNA polymerase catalytic core is composed of four subunits: alpha, beta, beta', and beta''. When a (nuclear-encoded) sigma factor is associated with the core the holoenzyme is formed, which can initiate transcription.

It localises to the plastid. The protein resides in the chloroplast. The enzyme catalyses RNA(n) + a ribonucleoside 5'-triphosphate = RNA(n+1) + diphosphate. In terms of biological role, DNA-dependent RNA polymerase catalyzes the transcription of DNA into RNA using the four ribonucleoside triphosphates as substrates. The protein is Putative DNA-directed RNA polymerase subunit alpha-like 2 (rpoAL2-A) of Pelargonium hortorum (Common geranium).